A 644-amino-acid polypeptide reads, in one-letter code: MSLKMDNRDVAGKANRWFGMAQPKSGKMNMNILHQEELIAQKKREIEARMEQKARQSHVASPQPPHPGEVADAQNSCISNKFANDGSFLQQFLKLQKAQASTDSAPRAPPSSPAPSSLKRPLLLSKRTGLGLGSPMGPVKNYSHAKQLPVAHRPSVFQSPDDDDEEEDYEQWLEIKVSPPEGAETRRVIEKLARFVAEGGPELEKVAMEDYKDNPAFTFLHDKNSREFLYYRKKVAEIRKEAQKPQAATQKVSPPEDEEAKNLAEKLARFIADGGPEVETIALQNNRENQAFSFLYDPNSQGYRYYKQKLEEFRKAKAGSTGSLPAPVPNPSLRRKSAPEALSGAVPPITACPTPVAPAPAVNPTPSIPGKPTATATVKRKRKSRWGPEEDKVELPPAELAQKDTDASPSPLSVQDLKGLGYEKGKPVGLVGVTELSDAQKKQLKEQQEMQQMYDMIMQHKRAMQDMQLLWEKALQQHQHGYDSDEEVDSELGTWEHQLRRMEMDKTREWAEQLTQMGRGKHFIGDFLPPDELEKFMETFKALKEGREPDYSEYKEFKLTVENIGYQMLMKMGWKEGEGLGTEGQGIKNPVNKGATTIDGAGFGIDRPAELSKEDDEYEAFRKRMMLAYRFRPNPLNNPRRPYY.

Residues 44-54 show a composition bias toward basic and acidic residues; the sequence is REIEARMEQKA. 2 disordered regions span residues 44–74 and 98–122; these read REIEARMEQKARQSHVASPQPPHPGEVADAQ and AQASTDSAPRAPPSSPAPSSLKRPL. Residue threonine 128 is modified to Phosphothreonine. One copy of the SURP motif 1 repeat lies at 188-230; the sequence is VIEKLARFVAEGGPELEKVAMEDYKDNPAFTFLHDKNSREFLY. Residue serine 253 is modified to Phosphoserine. The stretch at 263–306 is one SURP motif 2 repeat; the sequence is LAEKLARFIADGGPEVETIALQNNRENQAFSFLYDPNSQGYRYY. Disordered regions lie at residues 316–342 and 360–412; these read AKAGSTGSLPAPVPNPSLRRKSAPEAL and PAVN…PSPL. Serine 323 bears the Phosphoserine mark. The segment covering 360 to 369 has biased composition (pro residues); the sequence is PAVNPTPSIP. The short motif at 379–385 is the Nuclear localization signal element; it reads KRKRKSR. 4 positions are modified to phosphoserine: serine 408, serine 410, serine 413, and serine 484. The G-patch domain occupies 561-608; sequence VENIGYQMLMKMGWKEGEGLGTEGQGIKNPVNKGATTIDGAGFGIDRP.

Component of the spliceosome.

It is found in the nucleus. In terms of biological role, plays a role in pre-mRNA splicing. In Rattus norvegicus (Rat), this protein is SURP and G-patch domain-containing protein 1 (Sugp1).